Here is a 206-residue protein sequence, read N- to C-terminus: Imidazoleglycerol-phosphate dehydratase (206 aa).

The tract at residues M1 to T21 is disordered.

It belongs to the imidazoleglycerol-phosphate dehydratase family.

The protein resides in the cytoplasm. It catalyses the reaction D-erythro-1-(imidazol-4-yl)glycerol 3-phosphate = 3-(imidazol-4-yl)-2-oxopropyl phosphate + H2O. The protein operates within amino-acid biosynthesis; L-histidine biosynthesis; L-histidine from 5-phospho-alpha-D-ribose 1-diphosphate: step 6/9. The polypeptide is Imidazoleglycerol-phosphate dehydratase (Synechococcus sp. (strain JA-2-3B'a(2-13)) (Cyanobacteria bacterium Yellowstone B-Prime)).